We begin with the raw amino-acid sequence, 149 residues long: MADSLTEEQVSEYKEAFSLFDKDGDGQITTKELGTVMRSLGQNPSESELQDMINEVDADNNGTIDFPEFLTMMARKMKDTDSEEEIREAFKVFDRDNNGFISAAELRHVMTSIGEKLTDDEVDEMIREADQDGDGRIDYNEFVQLMMQK.

At A2 the chain carries N-acetylalanine. EF-hand domains are found at residues 8–43, 44–79, 81–116, and 117–149; these read EQVS…LGQN, PSES…KMKD, DSEE…IGEK, and LTDD…MMQK. The Ca(2+) site is built by D21, D23, D25, Q27, E32, D57, D59, N61, T63, E68, D94, D96, N98, E105, D130, D132, D134, R136, and E141.

Belongs to the calmodulin family.

In terms of biological role, calmodulin mediates the control of a large number of enzymes, ion channels and other proteins by Ca(2+). Among the enzymes to be stimulated by the calmodulin-Ca(2+) complex are a number of protein kinases and phosphatases. The protein is Calmodulin (camA) of Emericella nidulans (strain FGSC A4 / ATCC 38163 / CBS 112.46 / NRRL 194 / M139) (Aspergillus nidulans).